A 204-amino-acid chain; its full sequence is Large ribosomal subunit protein eL15 (204 aa).

It belongs to the eukaryotic ribosomal protein eL15 family. Component of the large ribosomal subunit.

The protein resides in the cytoplasm. Its function is as follows. Component of the large ribosomal subunit. The ribosome is a large ribonucleoprotein complex responsible for the synthesis of proteins in the cell. This chain is Large ribosomal subunit protein eL15 (rpl15), found in Carassius auratus (Goldfish).